The chain runs to 205 residues: D-alanine--D-alanine ligase (205 aa).

The region spanning 111 to 205 is the ATP-grasp domain; sequence KHVLKSLGID…LGRAIGTMEF (95 aa). 139-190 is a binding site for ATP; sequence MPYPFVIKPICGGSTIGVHAIFSRSEYLDLSVHADALEGRMLVEEYIPGQEV.

Belongs to the D-alanine--D-alanine ligase family. The cofactor is Mg(2+). Mn(2+) is required as a cofactor.

The protein resides in the cytoplasm. It catalyses the reaction 2 D-alanine + ATP = D-alanyl-D-alanine + ADP + phosphate + H(+). It functions in the pathway cell wall biogenesis; peptidoglycan biosynthesis. In terms of biological role, cell wall formation. The sequence is that of D-alanine--D-alanine ligase (ddl) from Anaplasma centrale.